We begin with the raw amino-acid sequence, 292 residues long: S-methyl-5'-thioadenosine phosphorylase (292 aa).

Phosphate is bound by residues Ser-11, 53 to 54 (RH), and 86 to 87 (SA). Met-184 provides a ligand contact to substrate. A phosphate-binding site is contributed by Thr-185. 208-210 (DYD) contacts substrate.

Belongs to the PNP/MTAP phosphorylase family. MTAP subfamily. As to quaternary structure, homohexamer. Dimer of a homotrimer.

The catalysed reaction is S-methyl-5'-thioadenosine + phosphate = 5-(methylsulfanyl)-alpha-D-ribose 1-phosphate + adenine. Its pathway is amino-acid biosynthesis; L-methionine biosynthesis via salvage pathway; S-methyl-5-thio-alpha-D-ribose 1-phosphate from S-methyl-5'-thioadenosine (phosphorylase route): step 1/1. Catalyzes the reversible phosphorylation of S-methyl-5'-thioadenosine (MTA) to adenine and 5-methylthioribose-1-phosphate. Involved in the breakdown of MTA, a major by-product of polyamine biosynthesis. Responsible for the first step in the methionine salvage pathway after MTA has been generated from S-adenosylmethionine. Has broad substrate specificity with 6-aminopurine nucleosides as preferred substrates. The chain is S-methyl-5'-thioadenosine phosphorylase from Koribacter versatilis (strain Ellin345).